The chain runs to 90 residues: Cell division topological specificity factor (90 aa).

The protein belongs to the MinE family.

In terms of biological role, prevents the cell division inhibition by proteins MinC and MinD at internal division sites while permitting inhibition at polar sites. This ensures cell division at the proper site by restricting the formation of a division septum at the midpoint of the long axis of the cell. The chain is Cell division topological specificity factor from Lachnoclostridium phytofermentans (strain ATCC 700394 / DSM 18823 / ISDg) (Clostridium phytofermentans).